Here is a 341-residue protein sequence, read N- to C-terminus: Elongation factor Ts, mitochondrial 2 (341 aa).

The N-terminal 17 residues, 1-17 (MLAARFASRAFPRTRLY), are a transit peptide targeting the mitochondrion.

Belongs to the EF-Ts family.

It is found in the mitochondrion. Its function is as follows. Associates with the EF-Tu.GDP complex and induces the exchange of GDP to GTP. It remains bound to the aminoacyl-tRNA.EF-Tu.GTP complex up to the GTP hydrolysis stage on the ribosome. The chain is Elongation factor Ts, mitochondrial 2 from Postia placenta (strain ATCC 44394 / Madison 698-R) (Brown rot fungus).